A 1075-amino-acid polypeptide reads, in one-letter code: Atos homolog protein A (1075 aa).

The segment at 24–32 (ALLITEGRT) is transactivation domain 1 (TAD1). Disordered stretches follow at residues 430 to 469 (FGSP…RQPA), 570 to 592 (YSPQ…PDSI), and 703 to 766 (LNKN…PHSV). A compositionally biased stretch (basic and acidic residues) spans 440 to 454 (DSREGKVREKSETRP). Residues 703 to 712 (LNKNKTNCSS) are compositionally biased toward polar residues. The span at 746-759 (DRLKTEQEAKRDSG) shows a compositional bias: basic and acidic residues. Residues 878–935 (LLGNFEESVLNYRLDPLGIVDGFTAEVGASGTFCPTHLTLPVEVSFYSVSDDNAPSPY) form a required for macropage invasion region. Residues 962–970 (FNPNKTVVK) are transactivation domain 2 (TAD2).

Belongs to the ATOS family.

The protein localises to the nucleus. Functionally, transcription regulator that syncronizes transcriptional and translational programs to promote macrophage invasion of tissues. The sequence is that of Atos homolog protein A (Atosa) from Mus musculus (Mouse).